A 327-amino-acid chain; its full sequence is ATPase ASNA1 homolog (327 aa).

26-33 lines the ATP pocket; sequence KGGVGKTT. Asp57 is an active-site residue. ATP-binding residues include Glu238 and Asn265. Zn(2+)-binding residues include Cys274 and Cys277.

It belongs to the arsA ATPase family. In terms of assembly, homodimer.

It is found in the cytoplasm. The protein resides in the endoplasmic reticulum. ATPase required for the post-translational delivery of tail-anchored (TA) proteins to the endoplasmic reticulum. Recognizes and selectively binds the transmembrane domain of TA proteins in the cytosol. This complex then targets to the endoplasmic reticulum by membrane-bound receptors, where the tail-anchored protein is released for insertion. This process is regulated by ATP binding and hydrolysis. ATP binding drives the homodimer towards the closed dimer state, facilitating recognition of newly synthesized TA membrane proteins. ATP hydrolysis is required for insertion. Subsequently, the homodimer reverts towards the open dimer state, lowering its affinity for the membrane-bound receptor, and returning it to the cytosol to initiate a new round of targeting. This Entamoeba dispar (strain ATCC PRA-260 / SAW760) protein is ATPase ASNA1 homolog.